Here is a 509-residue protein sequence, read N- to C-terminus: Maturase K (509 aa).

The protein belongs to the intron maturase 2 family. MatK subfamily.

It is found in the plastid. The protein localises to the chloroplast. Usually encoded in the trnK tRNA gene intron. Probably assists in splicing its own and other chloroplast group II introns. This is Maturase K from Ibicella lutea (Yellow unicorn-plant).